The chain runs to 174 residues: Large ribosomal subunit protein uL15 (174 aa).

Disordered stretches follow at residues 1-56 (MKLH…GQMR) and 150-174 (VERR…TPGA). Residues 21 to 35 (RGIGSGKGKTGGKGM) show a composition bias toward gly residues.

This sequence belongs to the universal ribosomal protein uL15 family. As to quaternary structure, part of the 50S ribosomal subunit.

Binds to the 23S rRNA. This chain is Large ribosomal subunit protein uL15, found in Roseiflexus castenholzii (strain DSM 13941 / HLO8).